A 25-amino-acid chain; its full sequence is Retinol-binding protein 3 (25 aa).

It localises to the secreted. The protein resides in the extracellular space. The protein localises to the extracellular matrix. It is found in the interphotoreceptor matrix. Its function is as follows. IRBP shuttles 11-cis and all trans retinoids between the retinol isomerase in the pigment epithelium and the visual pigments in the photoreceptor cells of the retina. The polypeptide is Retinol-binding protein 3 (RBP3) (Sus scrofa (Pig)).